The chain runs to 725 residues: uncharacterized protein (725 aa).

In terms of domain architecture, FtsK spans 363-556; it reads GTYVEIPLYS…FVTTRPEDSC (194 aa). Residue 382–389 participates in ATP binding; sequence GRTRGGKS.

Belongs to the FtsK/SpoIIIE/SftA family.

Probable DNA motor protein. May track DNA in a ATP-dependent manner by generating positive supercoils in front of it and negative supercoils behind it. This is an uncharacterized protein from Nostoc sp. (strain PCC 7120 / SAG 25.82 / UTEX 2576).